The primary structure comprises 258 residues: MTQHSRDTPQFYLTAPSPCPYLPGRQERKVFTHLVGDKATDLNDLLTHGGFRRSQSIAYRPACDQCRACVSVRVIANEFRPSRNFRKVLARNSDLVGEQRSAVPTSEQYSIFRSYLDQRHRHGGMADMTVLDYAMMVEDSHVETRIIEYRRRNLSNGPNARGGELVAVALTDVLSDGLSMVYSFFDPSETTRSLGTFMILDHIARARRQGLPYVYLGYWIEGSKKMDYKSRYLPQQRLAAAGWLRVEAEGGPAPEPQE.

This sequence belongs to the R-transferase family. Bpt subfamily.

It localises to the cytoplasm. It carries out the reaction N-terminal L-glutamyl-[protein] + L-leucyl-tRNA(Leu) = N-terminal L-leucyl-L-glutamyl-[protein] + tRNA(Leu) + H(+). The catalysed reaction is N-terminal L-aspartyl-[protein] + L-leucyl-tRNA(Leu) = N-terminal L-leucyl-L-aspartyl-[protein] + tRNA(Leu) + H(+). Functions in the N-end rule pathway of protein degradation where it conjugates Leu from its aminoacyl-tRNA to the N-termini of proteins containing an N-terminal aspartate or glutamate. In Bradyrhizobium sp. (strain ORS 278), this protein is Aspartate/glutamate leucyltransferase.